Consider the following 223-residue polypeptide: Chalcone--flavanone isomerase (223 aa).

The substrate site is built by Thr50, Asn114, and Thr191.

The protein belongs to the chalcone isomerase family.

It carries out the reaction a chalcone = a flavanone.. Its pathway is secondary metabolite biosynthesis; flavonoid biosynthesis. In terms of biological role, catalyzes the intramolecular cyclization of bicyclic chalcones into tricyclic (S)-flavanones. Responsible for the isomerization of 4,2',4',6'-tetrahydroxychalcone (also termed chalcone) into naringenin. The sequence is that of Chalcone--flavanone isomerase (CHI) from Pisum sativum (Garden pea).